A 539-amino-acid chain; its full sequence is Cytochrome P450 monooxygenase buaD (539 aa).

The first 16 residues, 1 to 16 (MLVPVLTLLGTLTATG), serve as a signal peptide directing secretion. A glycan (N-linked (GlcNAc...) asparagine) is linked at asparagine 120. Cysteine 478 is a binding site for heme. The N-linked (GlcNAc...) asparagine glycan is linked to asparagine 520.

Belongs to the cytochrome P450 family. Heme is required as a cofactor.

Its pathway is mycotoxin biosynthesis. In terms of biological role, cytochrome P450 monooxygenase; part of the gene cluster that mediates the biosynthesis of burnettramic acids, an unusual class of bolaamphiphilic pyrrolizidinediones that display potent antibacterial, antifungal, and cytotoxic activities. The first step of the biosynthesis of burnettramic acids is the hydroxylation of proline by the proline hydroxylase buaE to generate 4-hydroxyproline. The PKS-NRPS buaA and trans-enoyl reductase buaC construct the highly reduced polyketide chain, and the condensation (C) domain of buaA then catalyzes the amide bond formation with the activated 4-hydroxyproline. This is followed by the R domain releasing the nascent polyketide-peptide directly via a Dieckmann condensation to afford a tetramic acid fused to the hydroxyproline, generating the bicyclic pyrrolidinedione moiety. The cytochrome P450 monooxygenases buaD and buaG are likely responsible for the multiple hydroxylations on the polyketide chain and its terminus, although in the heterologous context, buaD does not appear to be required. Therefore, while buaG may be a multifunctional cytochrome P450 monooxygenase, it cannot be ruled out that the two secondary alcohols on the polyketide chain could have an acetate origin. Finally, the glycosyltransferase buaB transfers beta-D-mannose to the aglycone burnettramic acid A to form burnettramic acid A. Burnettramic acid B is a minor cis-pyrrolizidine epimer of burnettramic acid A and it is likely that small amounts of it form naturally in acidic environments. In Petromyces alliaceus (Aspergillus alliaceus), this protein is Cytochrome P450 monooxygenase buaD.